Here is a 375-residue protein sequence, read N- to C-terminus: MRVALISTSIFALCCSSNVRAEAVLPVNPSPYLVGAITRNMFRVPKPDQDLVLLSAHRGSWEVYPENSAYALQDAWNSQIEAVEVDARFTADKEVILSHDYRMERESTGTGFLYDQNYSQVQQADLRDRHGRVFKDSRGRNAKFMTFSAALDLLAQYVTDDGHGYVMIIDVKGAVDDQDPTDPIELTQRCLDILAAKKNPKLSKAVVFKLKAKDAVDIGTFLNRTTYDPNVMGGLIVVENPDDQNVKDSNYDPHEDTIYDQWNVAPFPVQFEMNQFYKGDGLQAYLDYVDQKQGFATYHESNYYPEGVANSAGKCCFEHNTDPRSVAHGGIVPDYRGEPEMAIVNRTNLITTDWPDVVADMLRQLGRRNTSKLSR.

Positions 52-301 (VLLSAHRGSW…KQGFATYHES (250 aa)) constitute a GP-PDE domain.

This is an uncharacterized protein from Sinorhizobium fredii (strain NBRC 101917 / NGR234).